The chain runs to 473 residues: Cephalotoxin-like protein (473 aa).

A signal peptide spans 1–21; sequence RWLGWQKFCWISCLFSSISSG. Coiled coils occupy residues 40–60 and 116–147; these read AINA…EALK and LINE…ADTA.

In terms of tissue distribution, component of the acid-insoluble and acid-soluble organic matrix of the aragonitic skeleton (at protein level).

The protein localises to the secreted. The polypeptide is Cephalotoxin-like protein (Acropora millepora (Staghorn coral)).